The primary structure comprises 258 residues: Ubiquinone/menaquinone biosynthesis C-methyltransferase UbiE (258 aa).

S-adenosyl-L-methionine-binding positions include Thr83, Asp104, and 130-131 (DA).

Belongs to the class I-like SAM-binding methyltransferase superfamily. MenG/UbiE family.

The enzyme catalyses a 2-demethylmenaquinol + S-adenosyl-L-methionine = a menaquinol + S-adenosyl-L-homocysteine + H(+). It catalyses the reaction a 2-methoxy-6-(all-trans-polyprenyl)benzene-1,4-diol + S-adenosyl-L-methionine = a 5-methoxy-2-methyl-3-(all-trans-polyprenyl)benzene-1,4-diol + S-adenosyl-L-homocysteine + H(+). It functions in the pathway quinol/quinone metabolism; menaquinone biosynthesis; menaquinol from 1,4-dihydroxy-2-naphthoate: step 2/2. The protein operates within cofactor biosynthesis; ubiquinone biosynthesis. Functionally, methyltransferase required for the conversion of demethylmenaquinol (DMKH2) to menaquinol (MKH2) and the conversion of 2-polyprenyl-6-methoxy-1,4-benzoquinol (DDMQH2) to 2-polyprenyl-3-methyl-6-methoxy-1,4-benzoquinol (DMQH2). The protein is Ubiquinone/menaquinone biosynthesis C-methyltransferase UbiE of Bordetella bronchiseptica (strain ATCC BAA-588 / NCTC 13252 / RB50) (Alcaligenes bronchisepticus).